Here is a 327-residue protein sequence, read N- to C-terminus: Ferrochelatase (327 aa).

Fe cation contacts are provided by His-187 and Glu-265.

Belongs to the ferrochelatase family.

The protein localises to the cytoplasm. The enzyme catalyses heme b + 2 H(+) = protoporphyrin IX + Fe(2+). It participates in porphyrin-containing compound metabolism; protoheme biosynthesis; protoheme from protoporphyrin-IX: step 1/1. Functionally, catalyzes the ferrous insertion into protoporphyrin IX. The sequence is that of Ferrochelatase from Chlamydia pneumoniae (Chlamydophila pneumoniae).